The chain runs to 88 residues: UPF0250 protein Sputcn32_2874 (88 aa).

Belongs to the UPF0250 family.

This is UPF0250 protein Sputcn32_2874 from Shewanella putrefaciens (strain CN-32 / ATCC BAA-453).